Reading from the N-terminus, the 416-residue chain is Probable protein phosphatase 2C 49 (416 aa).

Positions Arg91–Leu411 constitute a PPM-type phosphatase domain. Positions 131, 132, and 319 each coordinate Mn(2+). Positions Pro343–Ala360 are enriched in pro residues. The segment at Pro343–Gly368 is disordered. Residue Asp402 coordinates Mn(2+).

The protein belongs to the PP2C family. It depends on Mg(2+) as a cofactor. The cofactor is Mn(2+).

The enzyme catalyses O-phospho-L-seryl-[protein] + H2O = L-seryl-[protein] + phosphate. It catalyses the reaction O-phospho-L-threonyl-[protein] + H2O = L-threonyl-[protein] + phosphate. The polypeptide is Probable protein phosphatase 2C 49 (Oryza sativa subsp. japonica (Rice)).